Consider the following 123-residue polypeptide: Small ribosomal subunit protein uS12cz/uS12cy (123 aa).

It belongs to the universal ribosomal protein uS12 family. Part of the 30S ribosomal subunit.

It localises to the plastid. Its subcellular location is the chloroplast. With S4 and S5 plays an important role in translational accuracy. Located at the interface of the 30S and 50S subunits. The polypeptide is Small ribosomal subunit protein uS12cz/uS12cy (rps12-A) (Angiopteris evecta (Mule's foot fern)).